Here is a 309-residue protein sequence, read N- to C-terminus: Protease HtpX homolog (309 aa).

2 consecutive transmembrane segments (helical) span residues 7–27 (FILL…IGGP) and 28–48 (TGML…YWNA). H134 contributes to the Zn(2+) binding site. Residue E135 is part of the active site. H138 serves as a coordination point for Zn(2+). Helical transmembrane passes span 149–169 (VTAT…FFGG) and 177–197 (PGGL…AMLV). E206 is a binding site for Zn(2+). A disordered region spans residues 289–309 (TRGRSGTAVPTGATGKSGPWG).

This sequence belongs to the peptidase M48B family. Zn(2+) serves as cofactor.

It localises to the cell inner membrane. In Caulobacter sp. (strain K31), this protein is Protease HtpX homolog.